Here is a 413-residue protein sequence, read N- to C-terminus: Multifunctional CCA protein (413 aa).

Residues glycine 8 and arginine 11 each contribute to the ATP site. Residues glycine 8 and arginine 11 each coordinate CTP. Residues aspartate 21 and aspartate 23 each coordinate Mg(2+). Residues arginine 91, arginine 137, and arginine 140 each contribute to the ATP site. Residues arginine 91, arginine 137, and arginine 140 each contribute to the CTP site. One can recognise an HD domain in the interval 228-329 (TGVHTLMTLS…VKLFDAIDAW (102 aa)).

The protein belongs to the tRNA nucleotidyltransferase/poly(A) polymerase family. Bacterial CCA-adding enzyme type 1 subfamily. As to quaternary structure, monomer. Can also form homodimers and oligomers. The cofactor is Mg(2+). Requires Ni(2+) as cofactor.

The enzyme catalyses a tRNA precursor + 2 CTP + ATP = a tRNA with a 3' CCA end + 3 diphosphate. It catalyses the reaction a tRNA with a 3' CCA end + 2 CTP + ATP = a tRNA with a 3' CCACCA end + 3 diphosphate. Functionally, catalyzes the addition and repair of the essential 3'-terminal CCA sequence in tRNAs without using a nucleic acid template. Adds these three nucleotides in the order of C, C, and A to the tRNA nucleotide-73, using CTP and ATP as substrates and producing inorganic pyrophosphate. tRNA 3'-terminal CCA addition is required both for tRNA processing and repair. Also involved in tRNA surveillance by mediating tandem CCA addition to generate a CCACCA at the 3' terminus of unstable tRNAs. While stable tRNAs receive only 3'-terminal CCA, unstable tRNAs are marked with CCACCA and rapidly degraded. The chain is Multifunctional CCA protein from Salmonella typhimurium (strain LT2 / SGSC1412 / ATCC 700720).